Consider the following 791-residue polypeptide: Genome polyprotein (791 aa).

The segment at 1 to 15 is interaction with host EXOC1; sequence MNNQRKKTGRPSFNM. The Cytoplasmic segment spans residues 1-101; that stretch reads MNNQRKKTGR…LNIMNRRKRS (101 aa). Residues 37–72 form a hydrophobic; homodimerization of capsid protein C region; sequence LLSGQGPMKLVMAFIAFLRFLAIPPTAGILARWSSF. The propeptide at 101 to 114 is ER anchor for the capsid protein C, removed in mature form by serine protease NS3; it reads SVTMLLMLLPTALA. Residues 102-119 form a helical membrane-spanning segment; the sequence is VTMLLMLLPTALAFHLTT. Residues 120-242 are Extracellular-facing; that stretch reads RGGEPTLIVS…QIQKVETWAL (123 aa). The N-linked (GlcNAc...) asparagine; by host glycan is linked to Asn183. A helical transmembrane segment spans residues 243–260; that stretch reads RHPGFTVIGLFLAHAIGT. Position 261 (Ser261) is a topological domain, cytoplasmic. Residues 262 to 280 traverse the membrane as a helical segment; it reads ITQKGIIFILLMLVTPSMA. The Extracellular portion of the chain corresponds to 281 to 725; sequence MRCVGIGNRD…IHQIFGTAYG (445 aa). 4 disulfide bridges follow: Cys283–Cys310, Cys340–Cys401, Cys354–Cys385, and Cys372–Cys396. N-linked (GlcNAc...) asparagine; by host glycosylation occurs at Asn347. The interval 378–391 is fusion peptide; sequence DRGWGNGCGLFGKG. N-linked (GlcNAc...) asparagine; by host glycosylation occurs at Asn433. Intrachain disulfides connect Cys465-Cys565 and Cys582-Cys613. Residues 726-746 traverse the membrane as a helical segment; the sequence is ILFSGVSWTMKIGIGILLTWL. Over 747–752 the chain is Cytoplasmic; it reads GLNSRS. A helical transmembrane segment spans residues 753–775; that stretch reads TSLSMTCIAVGMVTLYLGVMVQA. Topologically, residues 776–791 are extracellular; the sequence is DSGCVINWKGKELKCG. Residues Cys779 and Cys790 are joined by a disulfide bond.

As to quaternary structure, homodimer. Interacts (via N-terminus) with host EXOC1 (via C-terminus); this interaction results in EXOC1 degradation through the proteasome degradation pathway. In terms of assembly, forms heterodimers with envelope protein E in the endoplasmic reticulum and Golgi. Homodimer; in the endoplasmic reticulum and Golgi. Interacts with protein prM. Interacts with non-structural protein 1. As to quaternary structure, homodimer; Homohexamer when secreted. Interacts with envelope protein E. Post-translationally, specific enzymatic cleavages in vivo yield mature proteins. Cleavages in the lumen of endoplasmic reticulum are performed by host signal peptidase, wereas cleavages in the cytoplasmic side are performed by serine protease NS3. Signal cleavage at the 2K-4B site requires a prior NS3 protease-mediated cleavage at the 4A-2K site. N-glycosylated. In terms of processing, N-glycosylated. The excreted form is glycosylated and this is required for efficient secretion of the protein from infected cells.

The protein resides in the virion. The protein localises to the host nucleus. Its subcellular location is the host cytoplasm. It is found in the host perinuclear region. It localises to the secreted. The protein resides in the virion membrane. The protein localises to the host endoplasmic reticulum membrane. Plays a role in virus budding by binding to the cell membrane and gathering the viral RNA into a nucleocapsid that forms the core of a mature virus particle. During virus entry, may induce genome penetration into the host cytoplasm after hemifusion induced by the surface proteins. Can migrate to the cell nucleus where it modulates host functions. Overcomes the anti-viral effects of host EXOC1 by sequestering and degrading the latter through the proteasome degradation pathway. Its function is as follows. Inhibits RNA silencing by interfering with host Dicer. Functionally, prevents premature fusion activity of envelope proteins in trans-Golgi by binding to envelope protein E at pH6.0. After virion release in extracellular space, gets dissociated from E dimers. In terms of biological role, acts as a chaperone for envelope protein E during intracellular virion assembly by masking and inactivating envelope protein E fusion peptide. prM is the only viral peptide matured by host furin in the trans-Golgi network probably to avoid catastrophic activation of the viral fusion activity in acidic GolGi compartment prior to virion release. prM-E cleavage is inefficient, and many virions are only partially matured. These uncleaved prM would play a role in immune evasion. May play a role in virus budding. Exerts cytotoxic effects by activating a mitochondrial apoptotic pathway through M ectodomain. May display a viroporin activity. Its function is as follows. Binds to host cell surface receptor and mediates fusion between viral and cellular membranes. Envelope protein is synthesized in the endoplasmic reticulum in the form of heterodimer with protein prM. They play a role in virion budding in the ER, and the newly formed immature particle is covered with 60 spikes composed of heterodimer between precursor prM and envelope protein E. The virion is transported to the Golgi apparatus where the low pH causes dissociation of PrM-E heterodimers and formation of E homodimers. prM-E cleavage is inefficient, and many virions are only partially matured. These uncleaved prM would play a role in immune evasion. Functionally, involved in immune evasion, pathogenesis and viral replication. Once cleaved off the polyprotein, is targeted to three destinations: the viral replication cycle, the plasma membrane and the extracellular compartment. Essential for viral replication. Required for formation of the replication complex and recruitment of other non-structural proteins to the ER-derived membrane structures. Excreted as a hexameric lipoparticle that plays a role against host immune response. Antagonizing the complement function. Binds to the host macrophages and dendritic cells. Inhibits signal transduction originating from Toll-like receptor 3 (TLR3). In terms of biological role, disrupts the host endothelial glycocalyx layer of host pulmonary microvascular endothelial cells, inducing degradation of sialic acid and shedding of heparan sulfate proteoglycans. NS1 induces expression of sialidases, heparanase, and activates cathepsin L, which activates heparanase via enzymatic cleavage. These effects are probably linked to the endothelial hyperpermeability observed in severe dengue disease. In Dengue virus type 1 (strain Jamaica/CV1636/1977) (DENV-1), this protein is Genome polyprotein.